Here is a 404-residue protein sequence, read N- to C-terminus: Flavohemoprotein (404 aa).

The 138-residue stretch at 1–138 (MLSEQTRSLV…LADTLIGIEN (138 aa)) folds into the Globin domain. Position 85 (His-85) interacts with heme b. Catalysis depends on charge relay system residues Tyr-95 and Glu-137. Positions 149–404 (GGWSGWRPFR…EVFGSHPGDD (256 aa)) are reductase. Residues 152 to 263 (SGWRPFRVAK…SAPQGDFFLH (112 aa)) form the FAD-binding FR-type domain. FAD contacts are provided by residues Tyr-190 and 206 to 209 (RQYS). Residue 276–281 (GVGQTP) coordinates NADP(+). 396–399 (VFGS) contacts FAD.

This sequence belongs to the globin family. Two-domain flavohemoproteins subfamily. It in the C-terminal section; belongs to the flavoprotein pyridine nucleotide cytochrome reductase family. The cofactor is heme b. FAD serves as cofactor.

It catalyses the reaction 2 nitric oxide + NADPH + 2 O2 = 2 nitrate + NADP(+) + H(+). The enzyme catalyses 2 nitric oxide + NADH + 2 O2 = 2 nitrate + NAD(+) + H(+). In terms of biological role, is involved in NO detoxification in an aerobic process, termed nitric oxide dioxygenase (NOD) reaction that utilizes O(2) and NAD(P)H to convert NO to nitrate, which protects the bacterium from various noxious nitrogen compounds. Therefore, plays a central role in the inducible response to nitrosative stress. The sequence is that of Flavohemoprotein from Chromobacterium violaceum (strain ATCC 12472 / DSM 30191 / JCM 1249 / CCUG 213 / NBRC 12614 / NCIMB 9131 / NCTC 9757 / MK).